Reading from the N-terminus, the 504-residue chain is Cytochrome P450 2D1 (504 aa).

Position 446 (cysteine 446) interacts with heme.

The protein belongs to the cytochrome P450 family. The cofactor is heme.

The protein localises to the endoplasmic reticulum membrane. It localises to the microsome membrane. It catalyses the reaction an organic molecule + reduced [NADPH--hemoprotein reductase] + O2 = an alcohol + oxidized [NADPH--hemoprotein reductase] + H2O + H(+). Functionally, cytochromes P450 are a group of heme-thiolate monooxygenases. In liver microsomes, this enzyme is involved in an NADPH-dependent electron transport pathway. It oxidizes a variety of structurally unrelated compounds, including steroids, fatty acids, and xenobiotics. The sequence is that of Cytochrome P450 2D1 (Cyp2d1) from Rattus norvegicus (Rat).